A 331-amino-acid chain; its full sequence is Cathepsin S (331 aa).

A signal peptide spans 1–16; sequence MNWLVWALLLCSSAMA. Positions 17–114 are cleaved as a propeptide — activation peptide; that stretch reads HVHRDPTLDH…VTYKSDPNQK (98 aa). A glycan (N-linked (GlcNAc...) asparagine) is linked at asparagine 104. Intrachain disulfides connect cysteine 126/cysteine 224, cysteine 136/cysteine 180, cysteine 170/cysteine 213, and cysteine 272/cysteine 320. Residue cysteine 139 is part of the active site. Residues histidine 278 and asparagine 298 contribute to the active site.

Belongs to the peptidase C1 family. In terms of assembly, monomer.

The protein resides in the lysosome. It localises to the secreted. It is found in the cytoplasmic vesicle. The protein localises to the phagosome. The catalysed reaction is Similar to cathepsin L, but with much less activity on Z-Phe-Arg-|-NHMec, and more activity on the Z-Val-Val-Arg-|-Xaa compound.. In terms of biological role, thiol protease. Key protease responsible for the removal of the invariant chain from MHC class II molecules and MHC class II antigen presentation. The bond-specificity of this proteinase is in part similar to the specificities of cathepsin L. The protein is Cathepsin S (CTSS) of Bos taurus (Bovine).